A 682-amino-acid polypeptide reads, in one-letter code: Potassium-transporting ATPase ATP-binding subunit (682 aa).

4 helical membrane-spanning segments follow: residues 34 to 54, 62 to 82, 219 to 239, and 254 to 274; these read PVMFIVWIGSLLTTCISIAMA, ALFSAAISGWLWITVLFANFA, IALTILLIALTIVFLLATATL, and VLVALLVCLIPTTIGGLLSAI. Aspartate 307 (4-aspartylphosphate intermediate) is an active-site residue. Residues aspartate 344, glutamate 348, 377–384, and lysine 395 contribute to the ATP site; that span reads FTAQSRMS. 2 residues coordinate Mg(2+): aspartate 518 and aspartate 522. The next 3 membrane-spanning stretches (helical) occupy residues 588–608, 616–636, and 656–676; these read FAIIPAAFAATYPQLNALNIM, AILSAVIFNALIIVFLIPLAL, and IYGLGGLLVPFIGIKVIDLLL.

The protein belongs to the cation transport ATPase (P-type) (TC 3.A.3) family. Type IA subfamily. The system is composed of three essential subunits: KdpA, KdpB and KdpC.

The protein resides in the cell inner membrane. It catalyses the reaction K(+)(out) + ATP + H2O = K(+)(in) + ADP + phosphate + H(+). In terms of biological role, part of the high-affinity ATP-driven potassium transport (or Kdp) system, which catalyzes the hydrolysis of ATP coupled with the electrogenic transport of potassium into the cytoplasm. This subunit is responsible for energy coupling to the transport system and for the release of the potassium ions to the cytoplasm. The polypeptide is Potassium-transporting ATPase ATP-binding subunit (Escherichia coli O9:H4 (strain HS)).